A 200-amino-acid polypeptide reads, in one-letter code: 3-isopropylmalate dehydratase small subunit (200 aa).

The protein belongs to the LeuD family. LeuD type 1 subfamily. Heterodimer of LeuC and LeuD.

It catalyses the reaction (2R,3S)-3-isopropylmalate = (2S)-2-isopropylmalate. Its pathway is amino-acid biosynthesis; L-leucine biosynthesis; L-leucine from 3-methyl-2-oxobutanoate: step 2/4. Catalyzes the isomerization between 2-isopropylmalate and 3-isopropylmalate, via the formation of 2-isopropylmaleate. This is 3-isopropylmalate dehydratase small subunit from Proteus mirabilis (strain HI4320).